The primary structure comprises 466 residues: Argininosuccinate lyase (466 aa).

It belongs to the lyase 1 family. Argininosuccinate lyase subfamily.

Its subcellular location is the cytoplasm. The enzyme catalyses 2-(N(omega)-L-arginino)succinate = fumarate + L-arginine. It functions in the pathway amino-acid biosynthesis; L-arginine biosynthesis; L-arginine from L-ornithine and carbamoyl phosphate: step 3/3. In Methylocella silvestris (strain DSM 15510 / CIP 108128 / LMG 27833 / NCIMB 13906 / BL2), this protein is Argininosuccinate lyase.